The chain runs to 74 residues: uncharacterized protein (74 aa).

This is an uncharacterized protein from Dictyostelium discoideum (Social amoeba).